The primary structure comprises 153 residues: Putative pre-16S rRNA nuclease (153 aa).

This sequence belongs to the YqgF nuclease family.

The protein localises to the cytoplasm. Could be a nuclease involved in processing of the 5'-end of pre-16S rRNA. The protein is Putative pre-16S rRNA nuclease of Koribacter versatilis (strain Ellin345).